The primary structure comprises 314 residues: Methionyl-tRNA formyltransferase (314 aa).

113-116 (SLLP) contacts (6S)-5,6,7,8-tetrahydrofolate.

Belongs to the Fmt family.

The catalysed reaction is L-methionyl-tRNA(fMet) + (6R)-10-formyltetrahydrofolate = N-formyl-L-methionyl-tRNA(fMet) + (6S)-5,6,7,8-tetrahydrofolate + H(+). Its function is as follows. Attaches a formyl group to the free amino group of methionyl-tRNA(fMet). The formyl group appears to play a dual role in the initiator identity of N-formylmethionyl-tRNA by promoting its recognition by IF2 and preventing the misappropriation of this tRNA by the elongation apparatus. The polypeptide is Methionyl-tRNA formyltransferase (Stutzerimonas stutzeri (strain A1501) (Pseudomonas stutzeri)).